The following is a 41-amino-acid chain: Large ribosomal subunit protein bL36 (41 aa).

It belongs to the bacterial ribosomal protein bL36 family.

In Mesorhizobium japonicum (strain LMG 29417 / CECT 9101 / MAFF 303099) (Mesorhizobium loti (strain MAFF 303099)), this protein is Large ribosomal subunit protein bL36.